The sequence spans 522 residues: Glutamyl-tRNA(Gln) amidotransferase subunit A (522 aa).

Residues Lys88 and Ser163 each act as charge relay system in the active site. The active-site Acyl-ester intermediate is Ser187.

It belongs to the amidase family. GatA subfamily. Heterotrimer of A, B and C subunits.

It carries out the reaction L-glutamyl-tRNA(Gln) + L-glutamine + ATP + H2O = L-glutaminyl-tRNA(Gln) + L-glutamate + ADP + phosphate + H(+). Allows the formation of correctly charged Gln-tRNA(Gln) through the transamidation of misacylated Glu-tRNA(Gln) in organisms which lack glutaminyl-tRNA synthetase. The reaction takes place in the presence of glutamine and ATP through an activated gamma-phospho-Glu-tRNA(Gln). This is Glutamyl-tRNA(Gln) amidotransferase subunit A from Paenarthrobacter aurescens (strain TC1).